The following is a 460-amino-acid chain: Ribulose bisphosphate carboxylase large chain (460 aa).

The residue at position 4 (lysine 4) is an N6,N6,N6-trimethyllysine. The substrate site is built by asparagine 113 and threonine 163. Lysine 165 acts as the Proton acceptor in catalysis. Lysine 167 serves as a coordination point for substrate. 3 residues coordinate Mg(2+): lysine 191, aspartate 193, and glutamate 194. The residue at position 191 (lysine 191) is an N6-carboxylysine. The active-site Proton acceptor is the histidine 284. Substrate-binding residues include arginine 285, histidine 317, and serine 369.

The protein belongs to the RuBisCO large chain family. Type I subfamily. Heterohexadecamer of 8 large chains and 8 small chains. The cofactor is Mg(2+).

It is found in the plastid. It localises to the chloroplast. It carries out the reaction 2 (2R)-3-phosphoglycerate + 2 H(+) = D-ribulose 1,5-bisphosphate + CO2 + H2O. It catalyses the reaction D-ribulose 1,5-bisphosphate + O2 = 2-phosphoglycolate + (2R)-3-phosphoglycerate + 2 H(+). Its function is as follows. RuBisCO catalyzes two reactions: the carboxylation of D-ribulose 1,5-bisphosphate, the primary event in carbon dioxide fixation, as well as the oxidative fragmentation of the pentose substrate in the photorespiration process. Both reactions occur simultaneously and in competition at the same active site. This Cunninghamia lanceolata (China fir) protein is Ribulose bisphosphate carboxylase large chain.